A 955-amino-acid chain; its full sequence is B3 domain-containing protein Os07g0563300 (955 aa).

Pro residues-rich tracts occupy residues 1–20 (MSSP…PPPS) and 29–45 (VQPP…PQQP). Disordered regions lie at residues 1-81 (MSSP…QRPR) and 325-392 (ARKG…SSSL). Positions 62–71 (QHQQQQQGPP) are enriched in low complexity. Residues 332–342 (DPCSSVSTTFK) show a composition bias toward polar residues. Over residues 343–355 (LDSHHPSILKDDP) the composition is skewed to basic and acidic residues. The span at 382-392 (QQQQQMASSSL) shows a compositional bias: low complexity. The TF-B3 DNA-binding region spans 453–554 (FEKMLSASDA…KLVMGFRKAT (102 aa)). Polar residues-rich tracts occupy residues 556–565 (LSAEQDQPTK) and 598–608 (NTESKSSSPVE). Positions 556 to 642 (LSAEQDQPTK…PLPVKRKATS (87 aa)) are disordered. The segment at 708-758 (SGENHQWAQCEDCSKWRKLPVDALLPSKWTCSDNKWDSERSSCDSAQEINM) adopts a CW-type zinc-finger fold. Residues C717, C720, C738, and C750 each contribute to the Zn(2+) site. A disordered region spans residues 856-955 (MMRREKRQQS…ATRLLRDNPT (100 aa)). The span at 862-877 (RQQSEKDSGVPRKREP) shows a compositional bias: basic and acidic residues. 2 stretches are compositionally biased toward polar residues: residues 878–900 (GQSS…SSPH) and 920–933 (TSSP…LNSQ). Over residues 939–955 (EQSPKSDATRLLRDNPT) the composition is skewed to basic and acidic residues.

The protein localises to the nucleus. The protein is B3 domain-containing protein Os07g0563300 of Oryza sativa subsp. japonica (Rice).